A 321-amino-acid chain; its full sequence is Malate dehydrogenase (321 aa).

Residues glycine 10–glycine 15 and aspartate 34 contribute to the NAD(+) site. Residues arginine 83 and arginine 89 each contribute to the substrate site. Residues asparagine 96 and isoleucine 119–asparagine 121 each bind NAD(+). 2 residues coordinate substrate: asparagine 121 and arginine 152. Catalysis depends on histidine 176, which acts as the Proton acceptor.

Belongs to the LDH/MDH superfamily. MDH type 3 family.

The enzyme catalyses (S)-malate + NAD(+) = oxaloacetate + NADH + H(+). Functionally, catalyzes the reversible oxidation of malate to oxaloacetate. In Xanthobacter autotrophicus (strain ATCC BAA-1158 / Py2), this protein is Malate dehydrogenase.